Consider the following 631-residue polypeptide: ATP-dependent zinc metalloprotease FtsH (631 aa).

The Cytoplasmic segment spans residues 1 to 5 (MKKSN). A helical membrane pass occupies residues 6-26 (PWFVFFWITLLVIVLMFINFA). Residues 27-102 (RQGGNEVELE…LEFSATEKSG (76 aa)) lie on the Periplasmic side of the membrane. A helical transmembrane segment spans residues 103-123 (WLGSLLLNWGPVVLLILFCFW). The Cytoplasmic segment spans residues 124–631 (MMRGMSMGNK…KVINEKVIIS (508 aa)). 196-203 (GSPGTGKT) is a binding site for ATP. His418 contributes to the Zn(2+) binding site. Residue Glu419 is part of the active site. 2 residues coordinate Zn(2+): His422 and Asp494.

In the central section; belongs to the AAA ATPase family. It in the C-terminal section; belongs to the peptidase M41 family. Homohexamer. Zn(2+) serves as cofactor.

It is found in the cell inner membrane. Acts as a processive, ATP-dependent zinc metallopeptidase for both cytoplasmic and membrane proteins. Plays a role in the quality control of integral membrane proteins. The sequence is that of ATP-dependent zinc metalloprotease FtsH from Endomicrobium trichonymphae.